A 415-amino-acid chain; its full sequence is Type II methyltransferase M.DdeI (415 aa).

An SAM-dependent MTase C5-type domain is found at 1-373 (MNIIDLFAGC…ERISWYFENI (373 aa)). Residue Cys-76 is part of the active site.

This sequence belongs to the class I-like SAM-binding methyltransferase superfamily. C5-methyltransferase family.

It carries out the reaction a 2'-deoxycytidine in DNA + S-adenosyl-L-methionine = a 5-methyl-2'-deoxycytidine in DNA + S-adenosyl-L-homocysteine + H(+). A methylase that recognizes the double-stranded sequence 5'-CTNAG-3', methylates C-1 on both strands, and protects the DNA from cleavage by the DdeI endonuclease. This Desulfomicrobium norvegicum (strain DSM 1741 / NCIMB 8310) (Desulfovibrio baculatus (strain Norway 4)) protein is Type II methyltransferase M.DdeI (ddeIM).